The following is a 398-amino-acid chain: Probable RNA methyltransferase sce1580 (398 aa).

The disordered stretch occupies residues 1–24 (MRVPEIPEETASPLRAGDPPAQVA). Catalysis depends on glutamate 140, which acts as the Proton acceptor. Residues 146–378 (GPARTTLCVS…TLVRRPRGRD (233 aa)) enclose the Radical SAM core domain. An intrachain disulfide couples cysteine 153 to cysteine 383. The [4Fe-4S] cluster site is built by cysteine 160, cysteine 164, and cysteine 167. S-adenosyl-L-methionine contacts are provided by residues 211–212 (GE), serine 243, 265–267 (SLN), and asparagine 340. Cysteine 383 (S-methylcysteine intermediate) is an active-site residue.

Belongs to the radical SAM superfamily. RlmN family. It depends on [4Fe-4S] cluster as a cofactor.

Its subcellular location is the cytoplasm. This Sorangium cellulosum (strain So ce56) (Polyangium cellulosum (strain So ce56)) protein is Probable RNA methyltransferase sce1580.